The chain runs to 503 residues: Lysine--tRNA ligase (503 aa).

The Mg(2+) site is built by E412 and E419.

Belongs to the class-II aminoacyl-tRNA synthetase family. As to quaternary structure, homodimer. Mg(2+) serves as cofactor.

The protein localises to the cytoplasm. The catalysed reaction is tRNA(Lys) + L-lysine + ATP = L-lysyl-tRNA(Lys) + AMP + diphosphate. In Buchnera aphidicola subsp. Schizaphis graminum (strain Sg), this protein is Lysine--tRNA ligase.